A 239-amino-acid chain; its full sequence is UPF0126 membrane protein VC_2382 (239 aa).

6 helical membrane passes run 38-58, 62-82, 86-106, 122-142, 153-173, and 185-205; these read LLYL…VLLA, KMDP…GGTI, ALGA…VIMI, AWWI…GIGV, LIAI…RDVL, and VYAT…AMGY.

Belongs to the UPF0126 family.

The protein resides in the cell membrane. This chain is UPF0126 membrane protein VC_2382, found in Vibrio cholerae serotype O1 (strain ATCC 39315 / El Tor Inaba N16961).